Here is a 529-residue protein sequence, read N- to C-terminus: uncharacterized protein (529 aa).

Residues 13–129 (QTAMRKMRAL…LSTLCQEAQR (117 aa)) enclose the Arf-GAP domain. A C4-type zinc finger spans residues 28 to 51 (CFDCGARNPTWCTVTYGVFLCIDC). Residues 291–301 (QMEAKVAKDPT) are compositionally biased toward basic and acidic residues. Disordered regions lie at residues 291-313 (QMEAKVAKDPTKAASVDRLGMGG), 335-357 (VLTFKKPSQPKEDDDWEVIDDKY), 398-424 (KSRYTASSSSSSTSRAPTTRLTAGASP), and 468-493 (FGSEDLWGNGSQQRQSSQVPDMSDLK). Over residues 399–420 (SRYTASSSSSSTSRAPTTRLTA) the composition is skewed to low complexity. A compositionally biased stretch (polar residues) spans 476 to 487 (NGSQQRQSSQVP).

In terms of biological role, GTPase-activating protein for the ADP ribosylation factor family. This is an uncharacterized protein from Caenorhabditis elegans.